Consider the following 704-residue polypeptide: Protein NPG1 (704 aa).

8 TPR repeats span residues 24–57, 58–90, 177–210, 309–342, 430–463, 555–588, 589–622, and 662–695; these read NGICMKTTEVEAKLDEGNIQEAESSLREGLSLNF, EEARALLGRLEYQRGNLEGALRVFEGIDLQAAI, SHAVELLPALWKESGDYQEAISAYRRALLSQWNL, IERWNTLALSYSAAGQNSAAVNLLRKSLHKHEQP, PDLIFELGVQYAEQRNLKAASRYAKEFIDATGGS, FEVWHGLAYLYSSLSHWNDVEVCLKKAGELKQYS, ASMLHTEGRMWEGRKEFKPALAAFLDGLLLDGSS, and RKAWYYLGMVHKSDGRIADATDCFQAASMLEESD.

As to quaternary structure, interacts with calmodulin in a calcium-dependent manner. Expressed only in pollen and in pollen tubes.

Calmodulin-binding protein essential for pollen germination, but not necessary for microsporogenesis or gametogenesis. The sequence is that of Protein NPG1 from Arabidopsis thaliana (Mouse-ear cress).